The sequence spans 332 residues: MKTLGEFIVEKQHDFPHATGELTALISAIKLGAKIIHRDINKAGLVDILGASGVENIQGEQQMKLDLYANEKLKAALKARGIVAGIASEEEDEIVIFEGVENGKYVVLMDPLDGSSNIDVNVSVGTIFSIYRRITPAGTPVTEEDFLQPGSQQVAAGYVVYGSSTMLVYTTGYGVHAFTYDPSLGVFCLSAERMTFPENGYTYSINEGNYIRFPQGVKKYLKFCQEEDKATRRPYTSRYIGSLVADFHRNLLKGGIYLYPSTASHPQGKLRLLYECNPMAFLAEQAGGKASDGKNRILDLVPETLHQRSPFFVGNDHMVNDTERFLREYPDN.

The Mg(2+) site is built by glutamate 89, aspartate 110, leucine 112, and aspartate 113. Residues aspartate 113 to serine 116, asparagine 206, tyrosine 239, tyrosine 257 to tyrosine 259, and lysine 269 contribute to the substrate site. Glutamate 275 serves as a coordination point for Mg(2+).

It belongs to the FBPase class 1 family. As to quaternary structure, homotetramer. The cofactor is Mg(2+).

The protein localises to the cytoplasm. It carries out the reaction beta-D-fructose 1,6-bisphosphate + H2O = beta-D-fructose 6-phosphate + phosphate. Its pathway is carbohydrate biosynthesis; gluconeogenesis. The polypeptide is Fructose-1,6-bisphosphatase class 1 (Erwinia tasmaniensis (strain DSM 17950 / CFBP 7177 / CIP 109463 / NCPPB 4357 / Et1/99)).